The sequence spans 1427 residues: DNA-directed RNA polymerase subunit beta' (1427 aa).

C70, C72, C85, and C88 together coordinate Zn(2+). Residues D461, D463, and D465 each contribute to the Mg(2+) site. Residues C809, C882, C889, and C892 each contribute to the Zn(2+) site. Residues 1394 to 1427 are disordered; the sequence is EAAIGDDPLGKVQGEDFTTDDVMVEERPEGASEE. Basic and acidic residues predominate over residues 1417–1427; the sequence is VEERPEGASEE.

The protein belongs to the RNA polymerase beta' chain family. As to quaternary structure, the RNAP catalytic core consists of 2 alpha, 1 beta, 1 beta' and 1 omega subunit. When a sigma factor is associated with the core the holoenzyme is formed, which can initiate transcription. Mg(2+) serves as cofactor. Zn(2+) is required as a cofactor.

The catalysed reaction is RNA(n) + a ribonucleoside 5'-triphosphate = RNA(n+1) + diphosphate. Its function is as follows. DNA-dependent RNA polymerase catalyzes the transcription of DNA into RNA using the four ribonucleoside triphosphates as substrates. This is DNA-directed RNA polymerase subunit beta' from Sphingopyxis alaskensis (strain DSM 13593 / LMG 18877 / RB2256) (Sphingomonas alaskensis).